Consider the following 637-residue polypeptide: Chaperone protein HtpG (637 aa).

The tract at residues 1–328 (MADIEELKFD…SSDLPLNISR (328 aa)) is a; substrate-binding. The segment at 329-556 (ETLQNNRIVE…DNSMDIRMER (228 aa)) is b. Positions 488–508 (IGASDDSGDKTSEDSGESASD) are disordered. The span at 494–508 (SGDKTSEDSGESASD) shows a compositional bias: basic and acidic residues. The tract at residues 557–637 (FLREQKQLNY…GVLAKIFSSK (81 aa)) is c.

It belongs to the heat shock protein 90 family. As to quaternary structure, homodimer.

It localises to the cytoplasm. In terms of biological role, molecular chaperone. Has ATPase activity. The protein is Chaperone protein HtpG of Anaplasma phagocytophilum (strain HZ).